Reading from the N-terminus, the 177-residue chain is Large ribosomal subunit protein uL5 (177 aa).

It belongs to the universal ribosomal protein uL5 family. As to quaternary structure, part of the 50S ribosomal subunit; part of the 5S rRNA/L5/L18/L25 subcomplex. Contacts the 5S rRNA and the P site tRNA. Forms a bridge to the 30S subunit in the 70S ribosome.

This is one of the proteins that bind and probably mediate the attachment of the 5S RNA into the large ribosomal subunit, where it forms part of the central protuberance. In the 70S ribosome it contacts protein S13 of the 30S subunit (bridge B1b), connecting the 2 subunits; this bridge is implicated in subunit movement. Contacts the P site tRNA; the 5S rRNA and some of its associated proteins might help stabilize positioning of ribosome-bound tRNAs. The protein is Large ribosomal subunit protein uL5 of Ehrlichia canis (strain Jake).